Consider the following 435-residue polypeptide: Trigger factor (435 aa).

The region spanning Gly-161–Pro-246 is the PPIase FKBP-type domain.

It belongs to the FKBP-type PPIase family. Tig subfamily.

The protein resides in the cytoplasm. It carries out the reaction [protein]-peptidylproline (omega=180) = [protein]-peptidylproline (omega=0). Its function is as follows. Involved in protein export. Acts as a chaperone by maintaining the newly synthesized protein in an open conformation. Functions as a peptidyl-prolyl cis-trans isomerase. The polypeptide is Trigger factor (Vibrio campbellii (strain ATCC BAA-1116)).